The following is a 696-amino-acid chain: Polyribonucleotide nucleotidyltransferase (696 aa).

Residues aspartate 483 and aspartate 489 each contribute to the Mg(2+) site. The KH domain maps to 550-609 (PRITTIWVKVDKIRDVIGSGGKNIRSVTEATGVSIDIDDTGKINIASTNKEACDLAIKMI). An S1 motif domain is found at 619 to 687 (GKLYMGTVKK…KQGKIKLSRK (69 aa)).

It belongs to the polyribonucleotide nucleotidyltransferase family. It depends on Mg(2+) as a cofactor.

The protein resides in the cytoplasm. The enzyme catalyses RNA(n+1) + phosphate = RNA(n) + a ribonucleoside 5'-diphosphate. Functionally, involved in mRNA degradation. Catalyzes the phosphorolysis of single-stranded polyribonucleotides processively in the 3'- to 5'-direction. In Citrifermentans bemidjiense (strain ATCC BAA-1014 / DSM 16622 / JCM 12645 / Bem) (Geobacter bemidjiensis), this protein is Polyribonucleotide nucleotidyltransferase.